The sequence spans 388 residues: Chorismate synthase (388 aa).

The NADP(+) site is built by Arg-39 and Arg-45. Residues 132 to 134, 251 to 252, Gly-296, 311 to 315, and Arg-337 each bind FMN; these read RSS, NA, and KPIPT.

Belongs to the chorismate synthase family. In terms of assembly, homotetramer. FMNH2 serves as cofactor.

It carries out the reaction 5-O-(1-carboxyvinyl)-3-phosphoshikimate = chorismate + phosphate. It participates in metabolic intermediate biosynthesis; chorismate biosynthesis; chorismate from D-erythrose 4-phosphate and phosphoenolpyruvate: step 7/7. Catalyzes the anti-1,4-elimination of the C-3 phosphate and the C-6 proR hydrogen from 5-enolpyruvylshikimate-3-phosphate (EPSP) to yield chorismate, which is the branch point compound that serves as the starting substrate for the three terminal pathways of aromatic amino acid biosynthesis. This reaction introduces a second double bond into the aromatic ring system. This chain is Chorismate synthase, found in Staphylococcus aureus (strain Mu50 / ATCC 700699).